Consider the following 475-residue polypeptide: tRNA modification GTPase MnmE (475 aa).

Arg24, Glu81, and Lys124 together coordinate (6S)-5-formyl-5,6,7,8-tetrahydrofolate. Residues 220–397 enclose the TrmE-type G domain; sequence GLSVVLAGQP…LRRELLRLVG (178 aa). Asn230 contacts K(+). Residues 230–235, 249–255, 274–277, and 378–380 contribute to the GTP site; these read NVGKSS, TPIAGTT, DTAG, and SAR. Mg(2+) is bound at residue Ser234. Residues Thr249, Ile251, and Thr254 each contribute to the K(+) site. Position 255 (Thr255) interacts with Mg(2+). Lys475 is a (6S)-5-formyl-5,6,7,8-tetrahydrofolate binding site.

This sequence belongs to the TRAFAC class TrmE-Era-EngA-EngB-Septin-like GTPase superfamily. TrmE GTPase family. In terms of assembly, homodimer. Heterotetramer of two MnmE and two MnmG subunits. The cofactor is K(+).

The protein resides in the cytoplasm. In terms of biological role, exhibits a very high intrinsic GTPase hydrolysis rate. Involved in the addition of a carboxymethylaminomethyl (cmnm) group at the wobble position (U34) of certain tRNAs, forming tRNA-cmnm(5)s(2)U34. This is tRNA modification GTPase MnmE from Cupriavidus necator (strain ATCC 17699 / DSM 428 / KCTC 22496 / NCIMB 10442 / H16 / Stanier 337) (Ralstonia eutropha).